A 126-amino-acid chain; its full sequence is Small ribosomal subunit protein bS16 (126 aa).

A disordered region spans residues 87–126 (ARSNPEKALPGKRALERVAEKKQKAEDAAAAAAAEASAAE). Residues 99–113 (RALERVAEKKQKAED) are compositionally biased toward basic and acidic residues. Over residues 114–126 (AAAAAAAEASAAE) the composition is skewed to low complexity.

This sequence belongs to the bacterial ribosomal protein bS16 family.

In Agrobacterium fabrum (strain C58 / ATCC 33970) (Agrobacterium tumefaciens (strain C58)), this protein is Small ribosomal subunit protein bS16.